The sequence spans 147 residues: MVEWTDKERSIISDIFSHMDYDDIGPKALSRCLVVYPWTQRYFSGFGNLYNAEGIMSNANVAAHGIKVLHGLDRGVKNMDNIAATYADLSTLHSEKLHVDPDNFKLLSDCITIVLAAKMGHAFTAETQGAFQKFLAVVVSALGKQYH.

In terms of domain architecture, Globin spans 3-147 (EWTDKERSII…VVSALGKQYH (145 aa)). Heme b contacts are provided by histidine 64 and histidine 93.

It belongs to the globin family. As to quaternary structure, heterotetramer of two alpha chains and two beta chains. Red blood cells.

In terms of biological role, involved in oxygen transport from gills to the various peripheral tissues. In Trematomus hansoni (Striped rockcod), this protein is Hemoglobin subunit beta (hbb).